Consider the following 258-residue polypeptide: Ribosomal RNA small subunit methyltransferase A (258 aa).

His13, Leu15, Gly40, Glu61, Asp86, and Asn106 together coordinate S-adenosyl-L-methionine.

It belongs to the class I-like SAM-binding methyltransferase superfamily. rRNA adenine N(6)-methyltransferase family. RsmA subfamily.

It localises to the cytoplasm. It carries out the reaction adenosine(1518)/adenosine(1519) in 16S rRNA + 4 S-adenosyl-L-methionine = N(6)-dimethyladenosine(1518)/N(6)-dimethyladenosine(1519) in 16S rRNA + 4 S-adenosyl-L-homocysteine + 4 H(+). Its function is as follows. Specifically dimethylates two adjacent adenosines (A1518 and A1519) in the loop of a conserved hairpin near the 3'-end of 16S rRNA in the 30S particle. May play a critical role in biogenesis of 30S subunits. The sequence is that of Ribosomal RNA small subunit methyltransferase A from Coxiella burnetii (strain RSA 331 / Henzerling II).